A 253-amino-acid polypeptide reads, in one-letter code: Probable transcriptional regulatory protein Synpcc7942_1017 (253 aa).

The protein belongs to the TACO1 family.

The protein resides in the cytoplasm. In Synechococcus elongatus (strain ATCC 33912 / PCC 7942 / FACHB-805) (Anacystis nidulans R2), this protein is Probable transcriptional regulatory protein Synpcc7942_1017.